Reading from the N-terminus, the 283-residue chain is Large ribosomal subunit protein uL4 (283 aa).

Belongs to the universal ribosomal protein uL4 family. Part of the 50S ribosomal subunit.

In terms of biological role, one of the primary rRNA binding proteins, this protein initially binds near the 5'-end of the 23S rRNA. It is important during the early stages of 50S assembly. It makes multiple contacts with different domains of the 23S rRNA in the assembled 50S subunit and ribosome. Functionally, forms part of the polypeptide exit tunnel. The sequence is that of Large ribosomal subunit protein uL4 from Pyrobaculum aerophilum (strain ATCC 51768 / DSM 7523 / JCM 9630 / CIP 104966 / NBRC 100827 / IM2).